Here is a 61-residue protein sequence, read N- to C-terminus: [Val1,Thr6]-bradykinyl-Gln,Ser (61 aa).

An N-terminal signal peptide occupies residues 1–22 (MSILKKSLFLVLFLGLVSFSIC). Residues 23–50 (EEEKREAEEEENEDEIEEQSEEKKRFEP) constitute a propeptide that is removed on maturation. Residues 25-61 (EKREAEEEENEDEIEEQSEEKKRFEPVPPGFTPFRQS) form a disordered region. Positions 30–42 (EEEENEDEIEEQS) are enriched in acidic residues. P52 carries the post-translational modification 4-hydroxyproline; in form [Val1,Hyp2,Thr6]-Bradykinyl-Gln,Ser and [Val1,Hyp2,Thr6]-Bradykinin.

It belongs to the frog skin active peptide (FSAP) family. Bradykinin-related peptide subfamily. As to expression, expressed by the skin glands.

The protein localises to the secreted. Induces contraction of rat ileum smooth muscle (EC(50)=2.73 uM) but has no activity towards smooth muscle from tail artery, urinary bladder or uterus up to concentrations of 100 uM. Binds to both bradykinin receptor B1 (BDKRB1) and B2 (BDKRB2); the effect via BDKRB1 is stronger. In terms of biological role, [Val1,Hyp2,Thr6]-bradykinin-Gln,Ser: Induces contraction of rat ileum smooth muscle (EC(50)=710 nM) but has no activity towards smooth muscle from tail artery, urinary bladder or uterus up to concentrations of 100 uM. Binds to both bradykinin receptor B1 (BDKRB1) and B2 (BDKRB2); the effect via BDKRB1 is stronger. Induces contraction of guinea pig ileum smooth muscle. In Pithecopus hypochondrialis (Orange-legged leaf frog), this protein is [Val1,Thr6]-bradykinyl-Gln,Ser.